A 264-amino-acid chain; its full sequence is Transformer-2 sex-determining protein (264 aa).

Positions 1–96 are disordered; the sequence is MDREPLSSGR…HKSREHPQAS (96 aa). The span at 13-22 shows a compositional bias: basic residues; the sequence is CSARYKHKRS. Over residues 23-33 the composition is skewed to low complexity; it reads ASSSSAGTTSS. S40 carries the phosphoserine modification. The segment covering 47–61 has biased composition (basic residues); sequence SRRHQRSSSRRRSRS. Basic and acidic residues predominate over residues 71 to 85; sequence EPRHRSGRSSRDRER. Residues 97–175 enclose the RRM domain; the sequence is RCIGVFGLNT…RRIRVDFSIT (79 aa). The interval 176-196 is linker; sequence QRAHTPTPGVYLGRQPRGKAP. The disordered stretch occupies residues 179 to 264; the sequence is HTPTPGVYLG…PQLRRTSSRY (86 aa). The residue at position 180 (T180) is a Phosphothreonine. Basic residues predominate over residues 191-206; it reads PRGKAPRSFSPRRGRR. The segment covering 207 to 234 has biased composition (basic and acidic residues); that stretch reads VYHDRSASPYDNYRDRYDYRNDRYDRNL. Phosphoserine occurs at positions 212 and 214. Over residues 235-250 the composition is skewed to basic residues; the sequence is RRSPSRNRYTRNRSYS. S254 carries the phosphoserine modification.

The protein belongs to the splicing factor SR family. Extensively phosphorylated on serine residues in the RS domain. As to expression, isoform Tmaj and isoform Tmin are expressed in males and females. Isoform msTmaj and isoform msTmin are present only in male germ cells.

Functionally, required for female sex determination in somatic cells and for spermatogenesis in male germ cells. Positive regulator of female-specific splicing and/or polyadenylation of doublesex (dsx) pre-mRNA. Splicing requires an enhancer complex, dsxRE (dsx repeat element: which contains six copies of a 13-nucleotide repeat and a purine-rich enhancer (PRE)). DsxRE is formed through cooperative interactions between tra, tra2 and the sr proteins, and these interactions require both the repeat sequences and PRE. PRE is required for specific binding of tra2 to the dsxRE. Protein-RNA and protein-protein interactions are involved in tra-2 dependent activation and repression of alternative splicing. Together with tra-2, plays a role in switching fru splicing from the male-specific pattern to the female-specific pattern through activation of the female-specific fru 5'-splice site. The chain is Transformer-2 sex-determining protein (tra2) from Drosophila melanogaster (Fruit fly).